A 182-amino-acid chain; its full sequence is Large ribosomal subunit protein uL6 (182 aa).

The protein belongs to the universal ribosomal protein uL6 family. Part of the 50S ribosomal subunit.

Its function is as follows. This protein binds to the 23S rRNA, and is important in its secondary structure. It is located near the subunit interface in the base of the L7/L12 stalk, and near the tRNA binding site of the peptidyltransferase center. The sequence is that of Large ribosomal subunit protein uL6 from Methanococcus maripaludis (strain C5 / ATCC BAA-1333).